We begin with the raw amino-acid sequence, 345 residues long: Guanine nucleotide-binding protein alpha-4 subunit (345 aa).

Residues 30–345 (KDVKLLLLGP…TILSQALEHF (316 aa)) enclose the G-alpha domain. The segment at 33-46 (KLLLLGPGESGKST) is G1 motif. GTP contacts are provided by residues 38 to 45 (GPGESGKS), 171 to 177 (LRCRVRT), 196 to 200 (DVGGQ), 265 to 268 (NKKD), and Ala320. Mg(2+) is bound by residues Ser45 and Thr177. Residues 169-177 (DVLRCRVRT) form a G2 motif region. The tract at residues 192–201 (LKIVDVGGQR) is G3 motif. The interval 261 to 268 (VLFLNKKD) is G4 motif. The interval 318-323 (TCAVDT) is G5 motif.

It belongs to the G-alpha family. G proteins are composed of 3 units; alpha, beta and gamma. The alpha chain contains the guanine nucleotide binding site.

Guanine nucleotide-binding proteins (G proteins) are involved as modulators or transducers in various transmembrane signaling systems. G alpha-4 plays a role in morphogenesis of the multicellular structure. In Dictyostelium discoideum (Social amoeba), this protein is Guanine nucleotide-binding protein alpha-4 subunit (gpaD).